We begin with the raw amino-acid sequence, 370 residues long: UDP-N-acetylglucosamine--N-acetylmuramyl-(pentapeptide) pyrophosphoryl-undecaprenol N-acetylglucosamine transferase (370 aa).

Residues 10 to 12 (TGG), Asn126, Ser200, Ile255, and Gln300 contribute to the UDP-N-acetyl-alpha-D-glucosamine site.

Belongs to the glycosyltransferase 28 family. MurG subfamily.

The protein localises to the cell membrane. The catalysed reaction is Mur2Ac(oyl-L-Ala-gamma-D-Glu-L-Lys-D-Ala-D-Ala)-di-trans,octa-cis-undecaprenyl diphosphate + UDP-N-acetyl-alpha-D-glucosamine = beta-D-GlcNAc-(1-&gt;4)-Mur2Ac(oyl-L-Ala-gamma-D-Glu-L-Lys-D-Ala-D-Ala)-di-trans,octa-cis-undecaprenyl diphosphate + UDP + H(+). It functions in the pathway cell wall biogenesis; peptidoglycan biosynthesis. In terms of biological role, cell wall formation. Catalyzes the transfer of a GlcNAc subunit on undecaprenyl-pyrophosphoryl-MurNAc-pentapeptide (lipid intermediate I) to form undecaprenyl-pyrophosphoryl-MurNAc-(pentapeptide)GlcNAc (lipid intermediate II). The protein is UDP-N-acetylglucosamine--N-acetylmuramyl-(pentapeptide) pyrophosphoryl-undecaprenol N-acetylglucosamine transferase of Lactobacillus delbrueckii subsp. bulgaricus (strain ATCC 11842 / DSM 20081 / BCRC 10696 / JCM 1002 / NBRC 13953 / NCIMB 11778 / NCTC 12712 / WDCM 00102 / Lb 14).